The primary structure comprises 63 residues: Overexpressed in colon carcinoma 1 protein homolog (63 aa).

The segment covering 1–12 has biased composition (low complexity); that stretch reads MGCGNSTAASAG. Residues 1-40 form a disordered region; that stretch reads MGCGNSTAASAGAGQGPAGAAKDVTEESITEDDKRRNYGG.

Belongs to the OCC1 family.

In Bos taurus (Bovine), this protein is Overexpressed in colon carcinoma 1 protein homolog.